Here is a 355-residue protein sequence, read N- to C-terminus: MTADTPSWPEVLSALLARRDLTEAEAAWAMHQIMSGEATDAQIAAFAVALRAKGESAEEVSGLSSVMLALAAPVPPIGEALDIVGSGGDRAHTVNISTMAAIVAAATGVVVAKHGNRAASSACGSADLLEALGVAIDLDGAGVARCIERAGIGFCFAPVFHPSLRYAAVARREIGIPTVFNFLGPLTNPARPTASAVGVADPRMAPVVAGVLARRGMRALVFRGDDGLDELTVTTTSTVWVVRDGSVQEVAFDPRAVGIEPADTAALRGADARHNAAVARAVLSGERGPIRDAVLLNAAAGLTAFDTPRPDQLVDQISAAMTRCAAAIDTGKAAQLLDAWVEASQAARGVDADRS.

Residues Gly85, 88–89, Thr93, 95–98, 113–121, and Ser125 contribute to the 5-phospho-alpha-D-ribose 1-diphosphate site; these read GD, NIST, and KHGNRAASS. Gly85 lines the anthranilate pocket. Ser97 is a binding site for Mg(2+). Asn116 is an anthranilate binding site. Residue Arg171 participates in anthranilate binding. Residues Asp229 and Glu230 each coordinate Mg(2+).

Belongs to the anthranilate phosphoribosyltransferase family. As to quaternary structure, homodimer. It depends on Mg(2+) as a cofactor.

It catalyses the reaction N-(5-phospho-beta-D-ribosyl)anthranilate + diphosphate = 5-phospho-alpha-D-ribose 1-diphosphate + anthranilate. It participates in amino-acid biosynthesis; L-tryptophan biosynthesis; L-tryptophan from chorismate: step 2/5. Its function is as follows. Catalyzes the transfer of the phosphoribosyl group of 5-phosphorylribose-1-pyrophosphate (PRPP) to anthranilate to yield N-(5'-phosphoribosyl)-anthranilate (PRA). The sequence is that of Anthranilate phosphoribosyltransferase from Acidothermus cellulolyticus (strain ATCC 43068 / DSM 8971 / 11B).